Consider the following 314-residue polypeptide: Deoxyribonuclease-1-like 1 (314 aa).

Positions 1–37 are cleaved as a signal peptide; it reads MPFGQPGFLWRVPDAHIAMRGLVMAPLLILLVGGTEA. Asn102 carries an N-linked (GlcNAc...) asparagine glycan. The active site involves Glu113. N-linked (GlcNAc...) asparagine glycosylation occurs at Asn133. Residue His164 is part of the active site. An intrachain disulfide couples Cys203 to Cys240. Asn239 carries N-linked (GlcNAc...) asparagine glycosylation.

This sequence belongs to the DNase I family. In terms of tissue distribution, highly expressed in heart and skeletal muscles. Low expression in brain and thymus. Intermediated expression in other tissues.

It localises to the endoplasmic reticulum. In Mus musculus (Mouse), this protein is Deoxyribonuclease-1-like 1 (Dnase1l1).